Here is a 353-residue protein sequence, read N- to C-terminus: Divinyl chlorophyll a/b light-harvesting protein PcbG (353 aa).

The next 6 membrane-spanning stretches (helical) occupy residues 28–48, 64–84, 90–110, 204–224, 244–264, and 308–328; these read FISS…ANTL, GLVV…NGVF, LLVV…GGML, IMGG…FHIL, FVLS…ALWC, and LTNV…FHGL.

Belongs to the PsbB/PsbC family. IsiA/Pcb subfamily. As to quaternary structure, the antenna complex consists of divinyl chlorophylls (a and b) and divinyl chlorophyll a/b binding proteins and binds more divinyl chlorophyll b than does the antenna complex from high-light-adapted Prochlorococcus. Also forms complexes with PSI, consisting of a PSI trimer with surrounded by a PcbG ring (probably with 18 subunits). Is the only subunit found in this ring under iron-replete conditions. Divinyl chlorophyll a is required as a cofactor. Requires divinyl chlorophyll b as cofactor.

It is found in the cellular thylakoid membrane. In terms of biological role, the antenna complex functions as a light receptor, it captures and delivers excitation energy to photosystems I. The Prochlorales pcb genes are not related to higher plant LHCs. In Prochlorococcus marinus (strain SARG / CCMP1375 / SS120), this protein is Divinyl chlorophyll a/b light-harvesting protein PcbG (pcbG).